We begin with the raw amino-acid sequence, 643 residues long: DNA-directed RNA polymerase subunit beta' (643 aa).

Residues cysteine 83, cysteine 85, cysteine 98, and cysteine 101 each coordinate Zn(2+). Mg(2+) contacts are provided by aspartate 480, aspartate 482, and aspartate 484.

This sequence belongs to the RNA polymerase beta' chain family. RpoC1 subfamily. In plastids the minimal PEP RNA polymerase catalytic core is composed of four subunits: alpha, beta, beta', and beta''. When a (nuclear-encoded) sigma factor is associated with the core the holoenzyme is formed, which can initiate transcription. Mg(2+) serves as cofactor. The cofactor is Zn(2+).

The protein localises to the plastid. The protein resides in the organellar chromatophore. The enzyme catalyses RNA(n) + a ribonucleoside 5'-triphosphate = RNA(n+1) + diphosphate. Its function is as follows. DNA-dependent RNA polymerase catalyzes the transcription of DNA into RNA using the four ribonucleoside triphosphates as substrates. This is DNA-directed RNA polymerase subunit beta' from Paulinella chromatophora.